Consider the following 89-residue polypeptide: Albumin-1 (89 aa).

Residue Ala-1 is a signal peptide. Disulfide bonds link Cys-4–Cys-21, Cys-8–Cys-23, and Cys-16–Cys-33. Residues 39–46 constitute a propeptide that is removed on maturation; the sequence is LSSVAKMI.

In terms of processing, the C-terminal glycine may be removed from A1b.

Functionally, A1b binds to basic 7S globulin (BG) and stimulates its phosphorylation activity. In Vigna radiata var. radiata (Mung bean), this protein is Albumin-1 (LEG).